The primary structure comprises 300 residues: Secreted mono- and diacylglycerol lipase LIP4 (300 aa).

The N-terminal stretch at 1-16 (MRFLAFLLCLVPLALC) is a signal peptide. Cysteines 54 and 293 form a disulfide. Residue Ser-167 is the Nucleophile of the active site. Asp-224 is a catalytic residue.

The protein belongs to the AB hydrolase superfamily. Lipase family. Class 3 subfamily.

It localises to the secreted. The catalysed reaction is a monoacylglycerol + H2O = glycerol + a fatty acid + H(+). It carries out the reaction a diacylglycerol + H2O = a monoacylglycerol + a fatty acid + H(+). Functionally, secreted lipase involved in Dandruff and seborrheic dermatitis (D/SD) probably via lipase-mediated breakdown of sebaceous lipids and release of irritating free fatty acids. Shows activity against monoglyceride and diglyceride substrates. Due to an absence of fatty acid synthase genes in Malassezia species, secretory lipases are essential for the yeast to generate free fatty acids from degradation of sebum and assimilate them as lipid sources for growth. Plays an essential role at the pathogen-host interface during disease progression. The polypeptide is Secreted mono- and diacylglycerol lipase LIP4 (Malassezia restricta (Seborrheic dermatitis infection agent)).